We begin with the raw amino-acid sequence, 444 residues long: Phosphoribosylamine--glycine ligase (444 aa).

The 216-residue stretch at 109–324 (RNLFKKYNIK…FLEVCEAIVN (216 aa)) folds into the ATP-grasp domain. 140–202 (LTEKGIKAVV…EEKLEGVEFT (63 aa)) is a binding site for ATP. Mg(2+) contacts are provided by Q282, E294, and N296. Mn(2+)-binding residues include Q282, E294, and N296.

It belongs to the GARS family. The cofactor is Mg(2+). Requires Mn(2+) as cofactor.

The enzyme catalyses 5-phospho-beta-D-ribosylamine + glycine + ATP = N(1)-(5-phospho-beta-D-ribosyl)glycinamide + ADP + phosphate + H(+). The protein operates within purine metabolism; IMP biosynthesis via de novo pathway; N(1)-(5-phospho-D-ribosyl)glycinamide from 5-phospho-alpha-D-ribose 1-diphosphate: step 2/2. This chain is Phosphoribosylamine--glycine ligase, found in Methanocaldococcus jannaschii (strain ATCC 43067 / DSM 2661 / JAL-1 / JCM 10045 / NBRC 100440) (Methanococcus jannaschii).